Reading from the N-terminus, the 160-residue chain is Nucleotide-binding protein Patl_4311 (160 aa).

Belongs to the YajQ family.

Functionally, nucleotide-binding protein. This chain is Nucleotide-binding protein Patl_4311, found in Pseudoalteromonas atlantica (strain T6c / ATCC BAA-1087).